The sequence spans 623 residues: ATP-dependent zinc metalloprotease FtsH (623 aa).

The Cytoplasmic portion of the chain corresponds to methionine 1–arginine 7. The helical transmembrane segment at proline 8 to glutamine 28 threads the bilayer. Residues glutamine 29–proline 117 lie on the Periplasmic side of the membrane. Residues leucine 118–valine 138 form a helical membrane-spanning segment. Residues glycine 139 to proline 623 are Cytoplasmic-facing. Glycine 214–threonine 221 contacts ATP. Histidine 435 provides a ligand contact to Zn(2+). Residue glutamate 436 is part of the active site. Residues histidine 439 and aspartate 511 each coordinate Zn(2+).

In the central section; belongs to the AAA ATPase family. This sequence in the C-terminal section; belongs to the peptidase M41 family. Homohexamer. Requires Zn(2+) as cofactor.

It localises to the cell inner membrane. In terms of biological role, acts as a processive, ATP-dependent zinc metallopeptidase for both cytoplasmic and membrane proteins. Plays a role in the quality control of integral membrane proteins. The protein is ATP-dependent zinc metalloprotease FtsH of Pelobacter propionicus (strain DSM 2379 / NBRC 103807 / OttBd1).